The sequence spans 419 residues: UDP-N-acetylglucosamine 1-carboxyvinyltransferase 2 (419 aa).

A phosphoenolpyruvate-binding site is contributed by 22-23 (KN). Position 92 (R92) interacts with UDP-N-acetyl-alpha-D-glucosamine. C116 acts as the Proton donor in catalysis. A 2-(S-cysteinyl)pyruvic acid O-phosphothioketal modification is found at C116. Residues 121 to 125 (RPIDL), D306, and I328 contribute to the UDP-N-acetyl-alpha-D-glucosamine site.

This sequence belongs to the EPSP synthase family. MurA subfamily.

The protein resides in the cytoplasm. The catalysed reaction is phosphoenolpyruvate + UDP-N-acetyl-alpha-D-glucosamine = UDP-N-acetyl-3-O-(1-carboxyvinyl)-alpha-D-glucosamine + phosphate. It participates in cell wall biogenesis; peptidoglycan biosynthesis. Functionally, cell wall formation. Adds enolpyruvyl to UDP-N-acetylglucosamine. This chain is UDP-N-acetylglucosamine 1-carboxyvinyltransferase 2, found in Streptococcus pyogenes serotype M1.